Consider the following 449-residue polypeptide: Tripartite motif-containing protein 64B (449 aa).

Residues 15–56 (CCICVNYFIDPVTIDCGHSFCRPCLCLCSEEGRAPMRCPSCR) form an RING-type zinc finger. The B box-type zinc finger occupies 87–128 (SSDNICVLHEETKELFCEADKRLLCGPCSESPEHMAHSHSPI). Zn(2+) contacts are provided by C92, H95, C114, and H120. Positions 189–225 (LDEEEQRHLQALEREAEELFQQLQDSQVRMTQHLERM) form a coiled coil. The region spanning 268 to 449 (ELTSWCITGV…LRPFFCFGCT (182 aa)) is the B30.2/SPRY domain.

This sequence belongs to the TRIM/RBCC family.

The polypeptide is Tripartite motif-containing protein 64B (TRIM64B) (Homo sapiens (Human)).